Here is a 220-residue protein sequence, read N- to C-terminus: MSNANFSILVDFAAGGLVLASVLIVWRRDLRAIVRLLAWQGAALAAIPLLRGIRDNDRALIAVGIAVLALRALVLPWLLARAVGAEAAAQREATPLVNTASSLLITAGLTLTAFAITQPVVNLEPGVTINAVPAAFAVVLIALFVMTTRLHAVSQAAGFLMLDNGIAATAFLLTAGVPLIVELGASLDVLFAVIVIGVLTGRLRRIFGDADLDKLRELRD.

The next 7 membrane-spanning stretches (helical) occupy residues 6 to 26 (FSIL…LIVW), 33 to 53 (IVRL…LRGI), 59 to 79 (ALIA…PWLL), 103 to 123 (LLIT…VVNL), 126 to 146 (GVTI…LFVM), 157 to 177 (AGFL…TAGV), and 179 to 199 (LIVE…IGVL).

It is found in the cell membrane. This is an uncharacterized protein from Mycobacterium tuberculosis (strain ATCC 25618 / H37Rv).